A 413-amino-acid chain; its full sequence is Histidine--tRNA ligase (413 aa).

This sequence belongs to the class-II aminoacyl-tRNA synthetase family. Homodimer.

Its subcellular location is the cytoplasm. The catalysed reaction is tRNA(His) + L-histidine + ATP = L-histidyl-tRNA(His) + AMP + diphosphate + H(+). This Ehrlichia canis (strain Jake) protein is Histidine--tRNA ligase.